Here is a 640-residue protein sequence, read N- to C-terminus: ESX-3 secretion system protein EccA3 (640 aa).

393-400 (GPPGTGKT) is an ATP binding site.

It belongs to the CbxX/CfxQ family. Part of the ESX-3 / type VII secretion system (T7SS), which is composed of cytosolic and membrane components.

It is found in the cytoplasm. Its function is as follows. Part of an ESX-3 / type VII specialized secretion system (T7SS), which exports several proteins. EccA3 exhibits ATPase activity and may provide energy for the export of ESX-3 substrates. The protein is ESX-3 secretion system protein EccA3 of Mycobacterium leprae (strain TN).